A 491-amino-acid chain; its full sequence is MANYFNTLNLRQQLAQLGKCRFMGRDEFADGASYLQGKKVVIVGCGAQGLNQGLNMRDSGLDIAYALRKEAIAEKRASWRKATENGFKVGTYEELIPQADLVVNLTPDKQHSDVVRSVQPLMKDGAALGYSHGFNIVEVGEQIRKDITVVMVAPKCPGTEVREEYKRGFGVPTLIAVHPENDPKGEGMAIAKAWAAATGGHRAGVLESSFVAEVKSDLMGEQTILCGMLQAGSLLCFDKLVEEGTDPAYAEKLIQYGWETITEALKQGGITLMMDRLSNPAKLRAYALSEQLKTIMAPLFQKHMDDIISGEFSSGMMADWANDDKKLLTWREETGKTAFETAPQYEGKIGEQEYFDKGVLMIAMVKAGVELAFETMVDSGIIEESAYYESLHELPLIANTIARKRLYEMNVVISDTAEYGNYLFSYACVPLLKAFMTEIQPGDLGKAIAEGAVDNAQLRDVNEAIRGHAIEKVGQKLRGYMTDMKRIAVAG.

Residues 15 to 208 form the KARI N-terminal Rossmann domain; the sequence is AQLGKCRFMG…GGHRAGVLES (194 aa). NADP(+) is bound by residues 45–48, Arg-68, Arg-76, Ser-78, and 108–110; these read CGAQ and DKQ. Residue His-132 is part of the active site. NADP(+) is bound at residue Gly-158. 2 consecutive KARI C-terminal knotted domains span residues 209–344 and 345–484; these read SFVA…TAPQ and YEGK…MTDM. Mg(2+)-binding residues include Asp-217, Glu-221, Glu-389, and Glu-393. A substrate-binding site is contributed by Ser-414.

It belongs to the ketol-acid reductoisomerase family. Mg(2+) is required as a cofactor.

The enzyme catalyses (2R)-2,3-dihydroxy-3-methylbutanoate + NADP(+) = (2S)-2-acetolactate + NADPH + H(+). It carries out the reaction (2R,3R)-2,3-dihydroxy-3-methylpentanoate + NADP(+) = (S)-2-ethyl-2-hydroxy-3-oxobutanoate + NADPH + H(+). It participates in amino-acid biosynthesis; L-isoleucine biosynthesis; L-isoleucine from 2-oxobutanoate: step 2/4. Its pathway is amino-acid biosynthesis; L-valine biosynthesis; L-valine from pyruvate: step 2/4. In terms of biological role, involved in the biosynthesis of branched-chain amino acids (BCAA). Catalyzes an alkyl-migration followed by a ketol-acid reduction of (S)-2-acetolactate (S2AL) to yield (R)-2,3-dihydroxy-isovalerate. In the isomerase reaction, S2AL is rearranged via a Mg-dependent methyl migration to produce 3-hydroxy-3-methyl-2-ketobutyrate (HMKB). In the reductase reaction, this 2-ketoacid undergoes a metal-dependent reduction by NADPH to yield (R)-2,3-dihydroxy-isovalerate. The protein is Ketol-acid reductoisomerase (NADP(+)) of Citrobacter koseri (strain ATCC BAA-895 / CDC 4225-83 / SGSC4696).